The chain runs to 1843 residues: MLSIDDHGGGGPLAVDIIPAGSGAQKTAPDAADPSLHGPGRANGDAVNADATAAEETGSRDDESQQQQQQQQQQQQQQQQQRSLLSERDLDQLWQWNAVVPETIQRCIHDIISEQAAQRPQDVAVQSWDGSLTYSELEHLSTQLALHLRLLGVDIGVTVPLCFEKSKWTVVALLAVMKAGAAFSLTDPSQPEARLQTIVEQTGAKLLVTSALQSSLGAKIAPGATVVAVSQATFDTPLQQSSDPLPDVPSSSLMYVIFTSGSTGKPKGVSISHENFTSGAIPRAEAVGYKSTSRVFDFPSYAFDVSIDCMLCTLACGGQVCVPSEQGRMNDLSGSIRDSKANMVHMTPSVARVLDSDIIPSLDVLGLGGEVVSGSDAATWRQFTHLIIGYGPSECTVGCTVNNNTSLSTGIGKGVGCVMWLVDPEDHNVLVPVGEVGELLIEGPVVGIGYLGEPAKTAEVFIEDPTWLTAGHGCYAGRHGRLYKTGDLVRYEDNLSGSIEFVGRKDQQVKIRGQRVELTEVEHHIQTCLPTGVKVVAEVIKPENASPTLVAFLAEKSSVGSQDGSLFVDPSPELSAALDKIDTTLGAKVPKYMIPAAFITLASMPTMVSMKTDRKKLREIGISIPRSKLGATHADEGPQEEPETDAEKKLAHAWQLVLASSSPVYKASSFFGLGGDSLRAMKLVSAAREQGLGLTVADIFNNPTLSAMANKSTSISSATQEQVKPFSLLQEGWDEQTARKDVAELCGIEPEQVEDVYPCTPLQEGLMALSSKVKEAYIAQRVVVLKDLETAKRLMAAYDEASRGSPILRTRIVQVPRRGLMQVVVNRKLEYTTGNNVAAYLASDRETPMDLGTALWRYAIITDEAAGTVSFVLTMHHALYDGWSMPLVVERINQAYQHPGKPLSRPSEFKDFIKYLLSQDAAESEKYWRAQLEGAHRLQFPLLPHQGYQTAADELLEEYVPLEQLPKNATVATLIRAAWAIVASQYINSTDVVFGETLTGRNAPVVGVDEIEGPMITTVPLRVPVDAEAQVGEFLQAIQEQTVGQIPHEHFGLQHIRRLSPDAREACELRAGLVLHPSADTAAPEVDATLPANNLIPHLAAREALKFNTFALMLVCSMDPKGFQVMASFDSKMVDKSTMRRALAQFKSVAQQLAQSTTTLLGNVRALSDDDAAALRDVVATAQEDPVVKTYDGASAAYIVRSDDASKMVPVGAIGELAIQTSQPKDLSTLPVPSWLAALLPPSAPTDALYLTGKLARYDAAGKIQVLGDKASLTASTDASAAARKPRVSATSQRQRRLRALWSHVLRTPETEIGLDDSFFLLGGDSISAMKLASEARPEGIRLTVAQMFSHKTLAEMAAVMECTDESSDSTAAAAAEAPIAPIAEPFELLDGLVDDKSAFLANVVKPQLQDASWTVSNVLPTRFLQELTVRATISKPRFAVRYELIFFDGPVDLRRLRQSCQRLVAHNEILRTVYVESADRIYAAVLDALETPFEEFAYTNPAVDLSTFTKDICRADVDKPQPLGSSFVKWLYVADPQRPAARSCLVFRMSHAQYDEMCLPIMLRQLSALYAHDKTPEPSVPFSAYVSHVMRTAVPASLPYWRELLAGSTITSFRPDIPITDRRHAAIAQTVDISARTRDVTLASLPTATWALCLARRRALRDVVFGEVVSGRNVGLPGAESIAGPCWQYVPLRVRFDPSWTGNDLLAFVQQQHVESAGHEAVSLREIAENCGLGWEKQASMPGDDRPAQWWFDTVCHQDVSHVKERENTDEEAQTKYETLYTDEEPLREWKVQTYVRDGGNSVVLEVVTFKSWEEHGKGLLADLVKAMEQLVHRPGEKLFSD.

The disordered stretch occupies residues 1-83; the sequence is MLSIDDHGGG…QQQQQQQQRS (83 aa). Positions 65-81 are enriched in low complexity; the sequence is QQQQQQQQQQQQQQQQQ. Residues 133–528 form an adenylation 1 region; that stretch reads TYSELEHLST…TEVEHHIQTC (396 aa). The disordered stretch occupies residues 628–647; the sequence is KLGATHADEGPQEEPETDAE. The region spanning 641–716 is the Carrier 1 domain; sequence EPETDAEKKL…AMANKSTSIS (76 aa). Ser-677 is subject to O-(pantetheine 4'-phosphoryl)serine. Residues 753–1175 form a condensation 1 region; that stretch reads VEDVYPCTPL…ALSDDDAAAL (423 aa). The Carrier 2 domain occupies 1289 to 1365; that stretch reads SATSQRQRRL…EMAAVMECTD (77 aa). O-(pantetheine 4'-phosphoryl)serine is present on Ser-1326. Residues 1447–1734 form a condensation 2 region; the sequence is FFDGPVDLRR…LREIAENCGL (288 aa).

It belongs to the NRP synthetase family. Pantetheine 4'-phosphate is required as a cofactor.

It participates in siderophore biosynthesis. Functionally, nonribosomal peptide synthetase; part of the gene cluster that mediates the biosynthesis of at least 11 siderophores, including beauverichelin A, dimerumic acid (DA), Na-dimethyl coprogen (NADC), eleutherazine B, ferricrocin (FC), fusarinine A, fusarinine C (FsC), metachelin A, mevalonolactone, rhodotorulic acid (RA) and tenellin. This cocktail of siderophores for iron metabolism is essential for virulence, and more specifically for the fungal virulence in penetrating through the host cuticle. Siderophore synthesis is also involved in conidial germination under iron-deficient conditions. SIDC catalyzes the assembly of ferricrocin whereas SIDD catalyzes the assembly of fusarinine C. This chain is Nonribosomal peptide synthetase SIDD, found in Beauveria bassiana (strain ARSEF 2860) (White muscardine disease fungus).